Reading from the N-terminus, the 406-residue chain is Acetylornithine/succinyldiaminopimelate aminotransferase (406 aa).

Pyridoxal 5'-phosphate contacts are provided by residues G108–T109 and F141. Position 144 (R144) interacts with N(2)-acetyl-L-ornithine. Pyridoxal 5'-phosphate is bound at residue D226–Q229. K255 carries the post-translational modification N6-(pyridoxal phosphate)lysine. S283 is a binding site for N(2)-acetyl-L-ornithine. Position 284 (T284) interacts with pyridoxal 5'-phosphate.

This sequence belongs to the class-III pyridoxal-phosphate-dependent aminotransferase family. ArgD subfamily. As to quaternary structure, homodimer. Requires pyridoxal 5'-phosphate as cofactor.

Its subcellular location is the cytoplasm. The enzyme catalyses N(2)-acetyl-L-ornithine + 2-oxoglutarate = N-acetyl-L-glutamate 5-semialdehyde + L-glutamate. It catalyses the reaction N-succinyl-(2S,6S)-2,6-diaminopimelate + 2-oxoglutarate = (S)-2-succinylamino-6-oxoheptanedioate + L-glutamate. Its pathway is amino-acid biosynthesis; L-arginine biosynthesis; N(2)-acetyl-L-ornithine from L-glutamate: step 4/4. It functions in the pathway amino-acid biosynthesis; L-lysine biosynthesis via DAP pathway; LL-2,6-diaminopimelate from (S)-tetrahydrodipicolinate (succinylase route): step 2/3. Involved in both the arginine and lysine biosynthetic pathways. The chain is Acetylornithine/succinyldiaminopimelate aminotransferase from Escherichia coli O157:H7.